The sequence spans 385 residues: Serpin-Z10 (385 aa).

Residues 333–357 (GTEAAAVSVGVVSCTSFRRNPDFVA) form an RCL region.

The protein belongs to the serpin family.

Functionally, probable serine protease inhibitor. The sequence is that of Serpin-Z10 from Arabidopsis thaliana (Mouse-ear cress).